A 311-amino-acid polypeptide reads, in one-letter code: ADP-L-glycero-D-manno-heptose-6-epimerase (311 aa).

Residues 10–11 (FI), 31–32 (DD), K38, K53, 75–79 (EGACS), and N92 each bind NADP(+). The active-site Proton acceptor is the Y139. K143 is a binding site for NADP(+). N174 lines the substrate pocket. Residues V175 and K183 each coordinate NADP(+). K183 functions as the Proton acceptor in the catalytic mechanism. Residues S185, H192, 206-209 (FEGE), R212, and Y275 each bind substrate.

Belongs to the NAD(P)-dependent epimerase/dehydratase family. HldD subfamily. As to quaternary structure, homopentamer. NADP(+) is required as a cofactor.

It catalyses the reaction ADP-D-glycero-beta-D-manno-heptose = ADP-L-glycero-beta-D-manno-heptose. The protein operates within nucleotide-sugar biosynthesis; ADP-L-glycero-beta-D-manno-heptose biosynthesis; ADP-L-glycero-beta-D-manno-heptose from D-glycero-beta-D-manno-heptose 7-phosphate: step 4/4. Its function is as follows. Catalyzes the interconversion between ADP-D-glycero-beta-D-manno-heptose and ADP-L-glycero-beta-D-manno-heptose via an epimerization at carbon 6 of the heptose. This is ADP-L-glycero-D-manno-heptose-6-epimerase from Psychromonas ingrahamii (strain DSM 17664 / CCUG 51855 / 37).